A 489-amino-acid chain; its full sequence is Ammonium transporter Rh type C (489 aa).

Over 1–21 (MGNCADCLRGFFCPPKNTNIR) the chain is Cytoplasmic. A helical transmembrane segment spans residues 22-42 (ISLPAVCFVWQIAMIVLFGVF). The Extracellular segment spans residues 43–75 (IRYDAESDIRLWLQLKHTNNITSDIENDFYFRY). N-linked (GlcNAc...) asparagine glycosylation is present at Asn62. The helical transmembrane segment at 76-96 (PSFQDVHVMIFVGFGFLMTFL) threads the bilayer. Residues 97–100 (KRYS) lie on the Cytoplasmic side of the membrane. A helical membrane pass occupies residues 101-121 (FGGVGFNFLIGAFGLQWALLM). Residues 122–140 (QGWFHALDPTTGKISIGVE) lie on the Extracellular side of the membrane. The chain crosses the membrane as a helical span at residues 141-161 (GLINADFCVAASLIAYGALLG). The Cytoplasmic segment spans residues 162–169 (KVSPVQLM). Residues 170-190 (VVTLFGVTLFAVEEYIILNLL) form a helical membrane-spanning segment. The Extracellular segment spans residues 191–195 (HCRDA). The helical transmembrane segment at 196 to 216 (GGSMVIHCFGGYYGLTISWIL) threads the bilayer. Topologically, residues 217–235 (YRPKLHQSKRLNGSVYHSD) are cytoplasmic. A helical membrane pass occupies residues 236 to 256 (VFAMIGTLFLWMFWPSFNSAI). The Extracellular portion of the chain corresponds to 257-266 (TDHGSGQHRT). Residues 267-287 (AINTYIALASSVLTTVAISSA) traverse the membrane as a helical segment. At 288-298 (SEKRGKLDMVH) the chain is on the cytoplasmic side. A helical transmembrane segment spans residues 299 to 319 (IQNATLAGGVAMGTAAEFMIT). Position 320 (Pro320) is a topological domain, extracellular. The helical transmembrane segment at 321–341 (YGALIVGFCTGIISTFGYLFV) threads the bilayer. Topologically, residues 342–359 (SPFMEKYLKIQDTCGVHN) are cytoplasmic. Residues 360–380 (LHAMPGMLGGFIGAIVAAAAT) form a helical membrane-spanning segment. Topologically, residues 381–412 (EEVYSREGLIETFDFEGKFADRTVGTQGGFQA) are extracellular. The chain crosses the membrane as a helical span at residues 413 to 433 (AGVCVAIAFAVVGGAVVGLIL). The Cytoplasmic portion of the chain corresponds to 434–489 (RLPIWGDPADDNCFDDEVYWEVPEDEEGILPVLEYNNHMTHKHQDISESNFSVEQS).

The protein belongs to the ammonium transporter (TC 2.A.49) family. Rh subfamily. Homotrimer.

Its subcellular location is the apical cell membrane. Functionally, functions as an ammonia transporter. May play a role in the elimination of ammonia in the gill. This Gasterosteus aculeatus (Three-spined stickleback) protein is Ammonium transporter Rh type C (rhcg).